Here is a 282-residue protein sequence, read N- to C-terminus: MYTLNWQPPYDWSWMLGFLAARAVSSVETVADSYYARSLAVGEYRGVVTAIPDIARHTLHINLSAGLEPVAAECLAKMSRLFDLQCNPQIVNGALGRLGAARPGLRLPGCVDAFEQGVRAILGQLVSVAMAAKLTARVAQLYGERLDDFPEYICFPTPQRLAAADPQALKALGMPLKRAEALIHLANAALEGTLPMTIPGDVEQAMKTLQTFPGIGRWTANYFALRGWQAKDVFLPDDYLIKQRFPGMTPAQIRRYAERWKPWRSYALLHIWYTEGWQPDEA.

The active-site Proton acceptor is the Asp-238.

Belongs to the alkylbase DNA glycosidase AlkA family. Monomer.

The enzyme catalyses Hydrolysis of alkylated DNA, releasing 3-methyladenine, 3-methylguanine, 7-methylguanine and 7-methyladenine.. In terms of biological role, hydrolysis of the deoxyribose N-glycosidic bond to excise 3-methyladenine, 3-methylguanine, 7-methylguanine, O2-methylthymine, and O2-methylcytosine from the damaged DNA polymer formed by alkylation lesions. This chain is DNA-3-methyladenine glycosylase 2 (alkA), found in Escherichia coli (strain K12).